Here is a 587-residue protein sequence, read N- to C-terminus: Lipoprotein LpqB (587 aa).

The N-terminal stretch at 1–19 is a signal peptide; that stretch reads MERLMRLTILLFLGAVLAG. Cys-20 carries the N-palmitoyl cysteine lipid modification. Cys-20 is lipidated: S-diacylglycerol cysteine.

This sequence belongs to the LpqB lipoprotein family. In terms of assembly, interacts with MtrB, probably extracytoplasmically.

The protein resides in the cell membrane. The protein localises to the secreted. It is found in the cell wall. May modulate activity of the MtrAB system in controlling homeostasis of the cell wall and cell division. This Mycobacterium tuberculosis (strain CDC 1551 / Oshkosh) protein is Lipoprotein LpqB.